Here is a 338-residue protein sequence, read N- to C-terminus: Glycerol-3-phosphate dehydrogenase [NAD(P)+] (338 aa).

Residues S14, Y15, H35, and K109 each contribute to the NADPH site. 3 residues coordinate sn-glycerol 3-phosphate: K109, G138, and T140. A142 lines the NADPH pocket. Sn-glycerol 3-phosphate is bound by residues K194, D247, S257, R258, and N259. The active-site Proton acceptor is the K194. R258 serves as a coordination point for NADPH. Residues V282 and E284 each coordinate NADPH.

The protein belongs to the NAD-dependent glycerol-3-phosphate dehydrogenase family.

The protein localises to the cytoplasm. It carries out the reaction sn-glycerol 3-phosphate + NAD(+) = dihydroxyacetone phosphate + NADH + H(+). It catalyses the reaction sn-glycerol 3-phosphate + NADP(+) = dihydroxyacetone phosphate + NADPH + H(+). The protein operates within membrane lipid metabolism; glycerophospholipid metabolism. In terms of biological role, catalyzes the reduction of the glycolytic intermediate dihydroxyacetone phosphate (DHAP) to sn-glycerol 3-phosphate (G3P), the key precursor for phospholipid synthesis. The sequence is that of Glycerol-3-phosphate dehydrogenase [NAD(P)+] from Shewanella oneidensis (strain ATCC 700550 / JCM 31522 / CIP 106686 / LMG 19005 / NCIMB 14063 / MR-1).